The primary structure comprises 310 residues: Ribosomal RNA small subunit methyltransferase H (310 aa).

S-adenosyl-L-methionine is bound by residues G32–H34, D52, F79, D100, and Q107.

The protein belongs to the methyltransferase superfamily. RsmH family.

The protein localises to the cytoplasm. The enzyme catalyses cytidine(1402) in 16S rRNA + S-adenosyl-L-methionine = N(4)-methylcytidine(1402) in 16S rRNA + S-adenosyl-L-homocysteine + H(+). Its function is as follows. Specifically methylates the N4 position of cytidine in position 1402 (C1402) of 16S rRNA. This Bacillus thuringiensis subsp. konkukian (strain 97-27) protein is Ribosomal RNA small subunit methyltransferase H.